Consider the following 951-residue polypeptide: Cation channel sperm-associated auxiliary subunit epsilon (951 aa).

The signal sequence occupies residues 1 to 19 (MSAREVAVLLLWLSCYGSA). The Extracellular segment spans residues 20-903 (LWRYSTNSPN…ETFGLIPSPS (884 aa)). 4 disulfides stabilise this stretch: cysteine 57-cysteine 71, cysteine 101-cysteine 206, cysteine 246-cysteine 336, and cysteine 410-cysteine 413. N-linked (GlcNAc...) asparagine glycosylation is found at asparagine 61 and asparagine 114. N-linked (GlcNAc...) asparagine glycans are attached at residues asparagine 414, asparagine 472, asparagine 487, asparagine 493, and asparagine 535. 4 disulfides stabilise this stretch: cysteine 583/cysteine 690, cysteine 703/cysteine 885, cysteine 719/cysteine 752, and cysteine 804/cysteine 835. N-linked (GlcNAc...) asparagine glycosylation occurs at asparagine 796. 3 N-linked (GlcNAc...) asparagine glycosylation sites follow: asparagine 854, asparagine 881, and asparagine 886. The helical transmembrane segment at 904–924 (VYLVASFLFVLMLLFFTILVL) threads the bilayer. Residues 925-951 (SYFRYMRIYRRYIYEPLHKPQRKRKKN) are Cytoplasmic-facing.

The protein belongs to the CATSPERD family. In terms of assembly, component of the CatSper complex or CatSpermasome composed of the core pore-forming members CATSPER1, CATSPER2, CATSPER3 and CATSPER4 as well as auxiliary members CATSPERB, CATSPERG, CATSPERD, CATSPERE, CATSPERZ, C2CD6/CATSPERT, TMEM249, TMEM262 and EFCAB9. HSPA1 may be an additional auxiliary complex member. The core complex members CATSPER1, CATSPER2, CATSPER3 and CATSPER4 form a heterotetrameric channel. The auxiliary CATSPERB, CATSPERG, CATSPERD and CATSPERE subunits form a pavilion-like structure over the pore which stabilizes the complex through interactions with CATSPER4, CATSPER3, CATSPER1 and CATSPER2 respectively. TMEM262/CATSPERH interacts with CATSPERB, further stabilizing the complex. C2CD6/CATSPERT interacts at least with CATSPERD and is required for targeting the CatSper complex in the flagellar membrane.

It is found in the cell projection. The protein resides in the cilium. The protein localises to the flagellum membrane. Auxiliary component of the CatSper complex, a complex involved in sperm cell hyperactivation. Sperm cell hyperactivation is needed for sperm motility which is essential late in the preparation of sperm for fertilization. This Homo sapiens (Human) protein is Cation channel sperm-associated auxiliary subunit epsilon.